A 681-amino-acid chain; its full sequence is Rabphilin-3A (681 aa).

Residues 1-21 (MTDTVVNRWMYPGDGPLQSND) are disordered. The RabBD domain occupies 40-157 (QRKQEELTDE…KRSGAWFFKG (118 aa)). The segment at 88–145 (GDGVNRCILCGEQLGMLGSACVVCEDCKKNVCTKCGVETSNNRPHPVWLCKICLEQRE) adopts an FYVE-type zinc-finger fold. Residues Cys94, Cys97, Cys111, Cys114, Cys119, Cys122, Cys137, and Cys140 each coordinate Zn(2+). The disordered stretch occupies residues 162 to 375 (VLPQPMPIKK…EEEANSYDSD (214 aa)). Basic and acidic residues predominate over residues 199–208 (ARGDMEDRRP). Arg223 carries the post-translational modification Omega-N-methylarginine. Residues 243 to 252 (RDSEGWDHAH) show a composition bias toward basic and acidic residues. Ser271 is modified (phosphoserine). The segment covering 278–296 (APAPVPSPAPPQPVQPGPP) has biased composition (pro residues). Positions 347–356 (AAPYSQAAPA) are enriched in low complexity. The span at 362–375 (AEEEEEEANSYDSD) shows a compositional bias: acidic residues. The C2 1 domain occupies 379-501 (TLGALEFSLL…KANQRKNFNI (123 aa)). Residues Met409, Asp410, Asp416, Asp471, Glu472, Asp473, Glu479, Glu526, Asp568, Asp574, Asp628, Tyr629, Asp630, and Asp636 each coordinate Ca(2+). In terms of domain architecture, C2 2 spans 537–670 (ERGKILVSLM…NKDKKIERWH (134 aa)). A phosphoserine mark is found at Ser679 and Ser680.

In terms of assembly, interacts with RAB3B, RAB3C, RAB3D, RAB8A, RAB27A and RAB27B. Interacts with RAB3A; this interaction recruits RPH3A to synaptic vesicules. Interacts (via C2B domain) with SNAP25. Interacts with deubiquitinating enzyme CAND1; this interaction results in the deubiquitination of RPH3A. Interacts with GRIN2A and DLG4; this ternary complex regulates NMDA receptor composition at postsynaptic membranes. Interacts with SNCA. It depends on Ca(2+) as a cofactor. Ubiquitinated. Deubiquitinated by CAND1 to prevent its degradation. As to expression, specifically expressed in brain.

Its subcellular location is the cytoplasmic vesicle. The protein resides in the secretory vesicle. It is found in the synaptic vesicle membrane. The protein localises to the cell projection. It localises to the dendritic spine. Its subcellular location is the postsynaptic cell membrane. The protein resides in the membrane. In terms of biological role, plays an essential role in docking and fusion steps of regulated exocytosis. At the presynaptic level, RPH3A is recruited by RAB3A to the synaptic vesicle membrane in a GTP-dependent manner where it modulates synaptic vesicle trafficking and calcium-triggered neurotransmitter release. In the post-synaptic compartment, forms a ternary complex with GRIN2A and DLG4 and regulates NMDA receptor stability. Also plays a role in the exocytosis of arginine vasopressin hormone. The sequence is that of Rabphilin-3A (Rph3a) from Mus musculus (Mouse).